The following is a 520-amino-acid chain: Cyclin-L2 (520 aa).

The residue at position 2 (A2) is an N-acetylalanine. Cyclin-like stretches follow at residues 83-185 (ELIQ…RVLK) and 198-282 (KIIV…KILQ). The segment at 316–520 (LPGGTQVLDG…DHPGHSRHRR (205 aa)) is disordered. A phosphoserine mark is found at S330, S338, S348, and S351. The span at 357–367 (RRLEGAKKAKA) shows a compositional bias: basic and acidic residues. The residue at position 369 (S369) is a Phosphoserine. Residues 376-390 (KGRESRSRSRSREQS) are compositionally biased toward basic and acidic residues. Positions 385 to 423 (RSREQSYSRSPSRSASPKRRKSDSGSTSGGSKSQSRSRS) are RS. Low complexity predominate over residues 408-436 (SGSTSGGSKSQSRSRSRSDSPPRQAPRSA). A compositionally biased stretch (basic and acidic residues) spans 441 to 454 (SEIRGSRKSKDCKY). The span at 456–471 (QKPHKSRSRSSSRSRS) shows a compositional bias: basic residues. Basic and acidic residues-rich tracts occupy residues 472 to 481 (RSRERADNPG) and 489 to 514 (YYRD…DHPG).

The protein belongs to the cyclin family. Cyclin L subfamily. As to quaternary structure, interacts with CDK11A, CDK11B, CDK12, CDK13 and POLR2A, the hyperphosphorylated C-terminal domain (CTD) of RNA polymerase II. May form a ternary complex with CDK11B and casein kinase II (CKII). Interacts with pre-mRNA-splicing factors, including at least SRSF1, SRSF2 AND SRSF7/SLU7. Widely expressed.

The protein resides in the nucleus speckle. It is found in the nucleus. It localises to the nucleoplasm. In terms of biological role, involved in pre-mRNA splicing. May induce cell death, possibly by acting on the transcription and RNA processing of apoptosis-related factors. The sequence is that of Cyclin-L2 (CCNL2) from Homo sapiens (Human).